The following is a 342-amino-acid chain: tRNA dimethylallyltransferase (342 aa).

The segment covering 1-13 (MNDTTAKTLNCSP) has biased composition (polar residues). The tract at residues 1 to 21 (MNDTTAKTLNCSPASRDGFPE) is disordered. Residue 40–47 (GPTGVGKT) participates in ATP binding. 42–47 (TGVGKT) contributes to the substrate binding site. Interaction with substrate tRNA stretches follow at residues 65–68 (DSMQ) and 189–193 (QRILR).

Belongs to the IPP transferase family. In terms of assembly, monomer. Requires Mg(2+) as cofactor.

It catalyses the reaction adenosine(37) in tRNA + dimethylallyl diphosphate = N(6)-dimethylallyladenosine(37) in tRNA + diphosphate. Its function is as follows. Catalyzes the transfer of a dimethylallyl group onto the adenine at position 37 in tRNAs that read codons beginning with uridine, leading to the formation of N6-(dimethylallyl)adenosine (i(6)A). The polypeptide is tRNA dimethylallyltransferase (Syntrophobacter fumaroxidans (strain DSM 10017 / MPOB)).